Here is a 369-residue protein sequence, read N- to C-terminus: UPF0754 membrane protein Aflv_2299 (369 aa).

2 helical membrane passes run 1–21 and 347–367; these read MGLF…GGMT and YLGA…TFFV.

Belongs to the UPF0754 family.

It localises to the cell membrane. This Anoxybacillus flavithermus (strain DSM 21510 / WK1) protein is UPF0754 membrane protein Aflv_2299.